The following is a 208-amino-acid chain: Large ribosomal subunit protein uL4 (208 aa).

The tract at residues 45 to 89 is disordered; it reads RQGTHAHKNRSAVSGGGKKPWRQKGTGRARQGSTRSPQWRGGGTV.

It belongs to the universal ribosomal protein uL4 family. In terms of assembly, part of the 50S ribosomal subunit.

Functionally, one of the primary rRNA binding proteins, this protein initially binds near the 5'-end of the 23S rRNA. It is important during the early stages of 50S assembly. It makes multiple contacts with different domains of the 23S rRNA in the assembled 50S subunit and ribosome. Forms part of the polypeptide exit tunnel. The protein is Large ribosomal subunit protein uL4 of Lactococcus lactis subsp. lactis (strain IL1403) (Streptococcus lactis).